Here is a 66-residue protein sequence, read N- to C-terminus: Large ribosomal subunit protein uL29 (66 aa).

Belongs to the universal ribosomal protein uL29 family.

The sequence is that of Large ribosomal subunit protein uL29 from Ruegeria sp. (strain TM1040) (Silicibacter sp.).